The primary structure comprises 142 residues: Universal stress protein D (142 aa).

The protein belongs to the universal stress protein A family.

The protein resides in the cytoplasm. Its function is as follows. Required for resistance to DNA-damaging agents. This chain is Universal stress protein D (uspD), found in Escherichia coli (strain K12).